The primary structure comprises 418 residues: Light-independent protochlorophyllide reductase subunit N (418 aa).

Positions 17, 42, and 103 each coordinate [4Fe-4S] cluster.

Belongs to the BchN/ChlN family. Protochlorophyllide reductase is composed of three subunits; ChlL, ChlN and ChlB. Forms a heterotetramer of two ChlB and two ChlN subunits. It depends on [4Fe-4S] cluster as a cofactor.

The enzyme catalyses chlorophyllide a + oxidized 2[4Fe-4S]-[ferredoxin] + 2 ADP + 2 phosphate = protochlorophyllide a + reduced 2[4Fe-4S]-[ferredoxin] + 2 ATP + 2 H2O. The protein operates within porphyrin-containing compound metabolism; chlorophyll biosynthesis (light-independent). Functionally, component of the dark-operative protochlorophyllide reductase (DPOR) that uses Mg-ATP and reduced ferredoxin to reduce ring D of protochlorophyllide (Pchlide) to form chlorophyllide a (Chlide). This reaction is light-independent. The NB-protein (ChlN-ChlB) is the catalytic component of the complex. This is Light-independent protochlorophyllide reductase subunit N from Prochlorococcus marinus (strain AS9601).